The following is a 75-amino-acid chain: Putative UPF0377 protein YJL222W-A (75 aa).

Belongs to the UPF0377 family.

The sequence is that of Putative UPF0377 protein YJL222W-A from Saccharomyces cerevisiae (strain ATCC 204508 / S288c) (Baker's yeast).